The sequence spans 328 residues: tRNA uridine(34) hydroxylase (328 aa).

The Rhodanese domain maps to 130 to 224; sequence LDEDTIVLDT…YGKDPEVQGE (95 aa). Cysteine 184 serves as the catalytic Cysteine persulfide intermediate.

Belongs to the TrhO family.

The enzyme catalyses uridine(34) in tRNA + AH2 + O2 = 5-hydroxyuridine(34) in tRNA + A + H2O. In terms of biological role, catalyzes oxygen-dependent 5-hydroxyuridine (ho5U) modification at position 34 in tRNAs. This chain is tRNA uridine(34) hydroxylase, found in Streptococcus uberis (strain ATCC BAA-854 / 0140J).